The following is a 308-amino-acid chain: Elongation factor Ts (308 aa).

Positions 80–83 (TDFV) are involved in Mg(2+) ion dislocation from EF-Tu.

It belongs to the EF-Ts family.

The protein localises to the cytoplasm. Its function is as follows. Associates with the EF-Tu.GDP complex and induces the exchange of GDP to GTP. It remains bound to the aminoacyl-tRNA.EF-Tu.GTP complex up to the GTP hydrolysis stage on the ribosome. This Erythrobacter litoralis (strain HTCC2594) protein is Elongation factor Ts.